Consider the following 203-residue polypeptide: Mediator of RNA polymerase II transcription subunit 22 (203 aa).

Residues 93-123 (SVNEAINQRNQQLRSLQEECDKKLIALRDEI) are a coiled coil. Over residues 164–188 (ESLSMPLTTATAEQSIATSQSSTPS) the composition is skewed to polar residues. The segment at 164 to 203 (ESLSMPLTTATAEQSIATSQSSTPSHPHVNGHGAGPTDHS) is disordered.

Belongs to the Mediator complex subunit 22 family. As to quaternary structure, component of the Mediator complex.

The protein resides in the nucleus. In terms of biological role, component of the Mediator complex, a coactivator involved in the regulated transcription of nearly all RNA polymerase II-dependent genes. Mediator functions as a bridge to convey information from gene-specific regulatory proteins to the basal RNA polymerase II transcription machinery. Mediator is recruited to promoters by direct interactions with regulatory proteins and serves as a scaffold for the assembly of a functional preinitiation complex with RNA polymerase II and the general transcription factors. The protein is Mediator of RNA polymerase II transcription subunit 22 (MED22) of Gallus gallus (Chicken).